The following is a 238-amino-acid chain: Purine nucleoside phosphorylase DeoD-type 1 (238 aa).

An a purine D-ribonucleoside-binding site is contributed by His-5. Residues Gly-21, Arg-25, Arg-44, and 88 to 91 (RVGS) each bind phosphate. Residues 180–182 (EME) and 204–205 (SD) contribute to the a purine D-ribonucleoside site. Asp-205 functions as the Proton donor in the catalytic mechanism.

This sequence belongs to the PNP/UDP phosphorylase family. In terms of assembly, homohexamer; trimer of homodimers.

The enzyme catalyses a purine D-ribonucleoside + phosphate = a purine nucleobase + alpha-D-ribose 1-phosphate. It carries out the reaction a purine 2'-deoxy-D-ribonucleoside + phosphate = a purine nucleobase + 2-deoxy-alpha-D-ribose 1-phosphate. Functionally, catalyzes the reversible phosphorolytic breakdown of the N-glycosidic bond in the beta-(deoxy)ribonucleoside molecules, with the formation of the corresponding free purine bases and pentose-1-phosphate. This chain is Purine nucleoside phosphorylase DeoD-type 1, found in Aliivibrio fischeri (strain ATCC 700601 / ES114) (Vibrio fischeri).